The primary structure comprises 354 residues: S-adenosylmethionine:tRNA ribosyltransferase-isomerase (354 aa).

Belongs to the QueA family. In terms of assembly, monomer.

The protein localises to the cytoplasm. The enzyme catalyses 7-aminomethyl-7-carbaguanosine(34) in tRNA + S-adenosyl-L-methionine = epoxyqueuosine(34) in tRNA + adenine + L-methionine + 2 H(+). Its pathway is tRNA modification; tRNA-queuosine biosynthesis. Transfers and isomerizes the ribose moiety from AdoMet to the 7-aminomethyl group of 7-deazaguanine (preQ1-tRNA) to give epoxyqueuosine (oQ-tRNA). The protein is S-adenosylmethionine:tRNA ribosyltransferase-isomerase of Salmonella heidelberg (strain SL476).